Consider the following 380-residue polypeptide: Crotonobetainyl-CoA reductase (380 aa).

It belongs to the acyl-CoA dehydrogenase family. As to quaternary structure, homotetramer. Requires FAD as cofactor.

It localises to the cytoplasm. The enzyme catalyses 4-(trimethylamino)butanoyl-CoA + oxidized [electron-transfer flavoprotein] + H(+) = crotonobetainyl-CoA + reduced [electron-transfer flavoprotein]. The protein operates within amine and polyamine metabolism; carnitine metabolism. Catalyzes the reduction of crotonobetainyl-CoA to gamma-butyrobetainyl-CoA. This is Crotonobetainyl-CoA reductase from Salmonella arizonae (strain ATCC BAA-731 / CDC346-86 / RSK2980).